Consider the following 333-residue polypeptide: Protoheme IX farnesyltransferase (333 aa).

A run of 7 helical transmembrane segments spans residues 64-84 (LICT…LNCL), 110-130 (TVFL…VSGV), 133-153 (LAAG…TVIL), 161-181 (IVFG…AATG), 189-209 (WLFG…AILL), 246-266 (IMGV…LLPF), and 287-307 (AKSL…LLLI).

Belongs to the UbiA prenyltransferase family. Protoheme IX farnesyltransferase subfamily.

The protein resides in the cell inner membrane. The enzyme catalyses heme b + (2E,6E)-farnesyl diphosphate + H2O = Fe(II)-heme o + diphosphate. It functions in the pathway porphyrin-containing compound metabolism; heme O biosynthesis; heme O from protoheme: step 1/1. In terms of biological role, converts heme B (protoheme IX) to heme O by substitution of the vinyl group on carbon 2 of heme B porphyrin ring with a hydroxyethyl farnesyl side group. This is Protoheme IX farnesyltransferase from Prochlorococcus marinus (strain AS9601).